Consider the following 213-residue polypeptide: Small ribosomal subunit protein uS3 (213 aa).

In terms of domain architecture, KH type-2 spans 38-106; that stretch reads IRAFVKKLLY…EFSLEVNEIR (69 aa).

It belongs to the universal ribosomal protein uS3 family. In terms of assembly, part of the 30S ribosomal subunit. Forms a tight complex with proteins S10 and S14.

In terms of biological role, binds the lower part of the 30S subunit head. Binds mRNA in the 70S ribosome, positioning it for translation. The sequence is that of Small ribosomal subunit protein uS3 from Desulfovibrio desulfuricans (strain ATCC 27774 / DSM 6949 / MB).